The primary structure comprises 509 residues: ATP synthase subunit alpha (509 aa).

Position 169-176 (169-176 (GDRQTGKT)) interacts with ATP.

It belongs to the ATPase alpha/beta chains family. As to quaternary structure, F-type ATPases have 2 components, CF(1) - the catalytic core - and CF(0) - the membrane proton channel. CF(1) has five subunits: alpha(3), beta(3), gamma(1), delta(1), epsilon(1). CF(0) has four main subunits: a(1), b(1), b'(1) and c(9-12).

Its subcellular location is the cellular chromatophore membrane. The enzyme catalyses ATP + H2O + 4 H(+)(in) = ADP + phosphate + 5 H(+)(out). Produces ATP from ADP in the presence of a proton gradient across the membrane. The alpha chain is a regulatory subunit. The sequence is that of ATP synthase subunit alpha from Rhodobacter capsulatus (Rhodopseudomonas capsulata).